The sequence spans 454 residues: Bifunctional protein GlmU (454 aa).

The tract at residues 1–225 (MNIVILAAGM…LWETLGVNSK (225 aa)) is pyrophosphorylase. Residues 6 to 9 (LAAG), lysine 20, glutamine 71, 76 to 77 (GT), 98 to 100 (YGD), glycine 135, glutamate 150, asparagine 165, and asparagine 223 each bind UDP-N-acetyl-alpha-D-glucosamine. Residue aspartate 100 coordinates Mg(2+). Position 223 (asparagine 223) interacts with Mg(2+). The interval 226 to 246 (VQLAEVERIHQRNLAQRLLET) is linker. Positions 247–454 (GVTLADPARI…WQRPVKKAKQ (208 aa)) are N-acetyltransferase. Residues arginine 329 and lysine 347 each coordinate UDP-N-acetyl-alpha-D-glucosamine. Residue histidine 359 is the Proton acceptor of the active site. Residues tyrosine 362 and asparagine 373 each contribute to the UDP-N-acetyl-alpha-D-glucosamine site. Acetyl-CoA-binding positions include alanine 376, 382–383 (NY), serine 401, alanine 419, and arginine 436.

The protein in the N-terminal section; belongs to the N-acetylglucosamine-1-phosphate uridyltransferase family. In the C-terminal section; belongs to the transferase hexapeptide repeat family. In terms of assembly, homotrimer. The cofactor is Mg(2+).

Its subcellular location is the cytoplasm. The catalysed reaction is alpha-D-glucosamine 1-phosphate + acetyl-CoA = N-acetyl-alpha-D-glucosamine 1-phosphate + CoA + H(+). It catalyses the reaction N-acetyl-alpha-D-glucosamine 1-phosphate + UTP + H(+) = UDP-N-acetyl-alpha-D-glucosamine + diphosphate. The protein operates within nucleotide-sugar biosynthesis; UDP-N-acetyl-alpha-D-glucosamine biosynthesis; N-acetyl-alpha-D-glucosamine 1-phosphate from alpha-D-glucosamine 6-phosphate (route II): step 2/2. It participates in nucleotide-sugar biosynthesis; UDP-N-acetyl-alpha-D-glucosamine biosynthesis; UDP-N-acetyl-alpha-D-glucosamine from N-acetyl-alpha-D-glucosamine 1-phosphate: step 1/1. Its pathway is bacterial outer membrane biogenesis; LPS lipid A biosynthesis. Functionally, catalyzes the last two sequential reactions in the de novo biosynthetic pathway for UDP-N-acetylglucosamine (UDP-GlcNAc). The C-terminal domain catalyzes the transfer of acetyl group from acetyl coenzyme A to glucosamine-1-phosphate (GlcN-1-P) to produce N-acetylglucosamine-1-phosphate (GlcNAc-1-P), which is converted into UDP-GlcNAc by the transfer of uridine 5-monophosphate (from uridine 5-triphosphate), a reaction catalyzed by the N-terminal domain. The sequence is that of Bifunctional protein GlmU from Cupriavidus pinatubonensis (strain JMP 134 / LMG 1197) (Cupriavidus necator (strain JMP 134)).